Consider the following 401-residue polypeptide: Phosphoglycerate kinase (401 aa).

Substrate contacts are provided by residues 29-31, arginine 45, 69-72, arginine 125, and arginine 158; these read DFN and HLGR. ATP-binding positions include lysine 209, glutamate 331, and 357–360; that span reads GGDT.

Belongs to the phosphoglycerate kinase family. Monomer.

The protein localises to the cytoplasm. The catalysed reaction is (2R)-3-phosphoglycerate + ATP = (2R)-3-phospho-glyceroyl phosphate + ADP. Its pathway is carbohydrate degradation; glycolysis; pyruvate from D-glyceraldehyde 3-phosphate: step 2/5. This is Phosphoglycerate kinase from Wolinella succinogenes (strain ATCC 29543 / DSM 1740 / CCUG 13145 / JCM 31913 / LMG 7466 / NCTC 11488 / FDC 602W) (Vibrio succinogenes).